Consider the following 295-residue polypeptide: Protein FAM221A (295 aa).

Residues 272-283 (QERLLKEKEQKR) show a composition bias toward basic and acidic residues. The disordered stretch occupies residues 272 to 295 (QERLLKEKEQKRQKNSKPPTTNRP).

The protein belongs to the FAM221 family.

The protein is Protein FAM221A (fam221a) of Xenopus tropicalis (Western clawed frog).